Consider the following 886-residue polypeptide: DNA mismatch repair protein MutS (886 aa).

Position 626-633 (626-633) interacts with ATP; sequence GPNMGGKS.

It belongs to the DNA mismatch repair MutS family.

This protein is involved in the repair of mismatches in DNA. It is possible that it carries out the mismatch recognition step. This protein has a weak ATPase activity. This chain is DNA mismatch repair protein MutS, found in Burkholderia ambifaria (strain ATCC BAA-244 / DSM 16087 / CCUG 44356 / LMG 19182 / AMMD) (Burkholderia cepacia (strain AMMD)).